Reading from the N-terminus, the 246-residue chain is Acetoacetate decarboxylase (246 aa).

Lysine 116 acts as the Schiff-base intermediate with acetoacetate in catalysis.

It belongs to the ADC family.

The catalysed reaction is acetoacetate + H(+) = acetone + CO2. Functionally, catalyzes the conversion of acetoacetate to acetone and carbon dioxide. The chain is Acetoacetate decarboxylase from Bordetella avium (strain 197N).